A 156-amino-acid polypeptide reads, in one-letter code: Succinate dehydrogenase assembly factor 2-B, mitochondrial (156 aa).

A mitochondrion-targeting transit peptide spans 1–12; the sequence is MLRQILSSAVAK.

It belongs to the SDHAF2 family. In terms of assembly, interacts with the flavoprotein subunit within the SDH catalytic dimer.

Its subcellular location is the mitochondrion matrix. Functionally, plays an essential role in the assembly of succinate dehydrogenase (SDH), an enzyme complex (also referred to as respiratory complex II) that is a component of both the tricarboxylic acid (TCA) cycle and the mitochondrial electron transport chain, and which couples the oxidation of succinate to fumarate with the reduction of ubiquinone (coenzyme Q) to ubiquinol. Required for flavinylation (covalent attachment of FAD) of the flavoprotein subunit of the SDH catalytic dimer. The chain is Succinate dehydrogenase assembly factor 2-B, mitochondrial from Drosophila willistoni (Fruit fly).